A 155-amino-acid polypeptide reads, in one-letter code: Regulatory protein RecX (155 aa).

The protein belongs to the RecX family.

Its subcellular location is the cytoplasm. Functionally, modulates RecA activity. The chain is Regulatory protein RecX from Pseudomonas syringae pv. tomato (strain ATCC BAA-871 / DC3000).